The chain runs to 366 residues: Chorismate synthase (366 aa).

Arg-48 contributes to the NADP(+) binding site. Residues 125 to 127 (RSS), Gly-285, 300 to 304 (KPTPS), and Arg-327 each bind FMN.

The protein belongs to the chorismate synthase family. FMNH2 is required as a cofactor.

It carries out the reaction 5-O-(1-carboxyvinyl)-3-phosphoshikimate = chorismate + phosphate. It functions in the pathway metabolic intermediate biosynthesis; chorismate biosynthesis; chorismate from D-erythrose 4-phosphate and phosphoenolpyruvate: step 7/7. Functionally, catalyzes the anti-1,4-elimination of the C-3 phosphate and the C-6 proR hydrogen from 5-enolpyruvylshikimate-3-phosphate (EPSP) to yield chorismate, which is the branch point compound that serves as the starting substrate for the three terminal pathways of aromatic amino acid biosynthesis. This reaction introduces a second double bond into the aromatic ring system. In Methanococcoides burtonii (strain DSM 6242 / NBRC 107633 / OCM 468 / ACE-M), this protein is Chorismate synthase.